Reading from the N-terminus, the 152-residue chain is Deoxyuridine 5'-triphosphate nucleotidohydrolase (152 aa).

Residues arginine 63–glycine 65, asparagine 76, and threonine 80–aspartate 82 contribute to the substrate site. Positions leucine 129–glycine 152 are disordered.

Belongs to the dUTPase family. Requires Mg(2+) as cofactor.

The enzyme catalyses dUTP + H2O = dUMP + diphosphate + H(+). The protein operates within pyrimidine metabolism; dUMP biosynthesis; dUMP from dCTP (dUTP route): step 2/2. Its function is as follows. This enzyme is involved in nucleotide metabolism: it produces dUMP, the immediate precursor of thymidine nucleotides and it decreases the intracellular concentration of dUTP so that uracil cannot be incorporated into DNA. This chain is Deoxyuridine 5'-triphosphate nucleotidohydrolase, found in Cutibacterium acnes (strain DSM 16379 / KPA171202) (Propionibacterium acnes).